Reading from the N-terminus, the 172-residue chain is RNA pyrophosphohydrolase (172 aa).

The Nudix hydrolase domain maps to 6-149 (GFRANVGIII…KRDVYRKVMK (144 aa)). The Nudix box motif lies at 38-59 (GGVDEGETPEEAMFRELYEEVG).

Belongs to the Nudix hydrolase family. RppH subfamily. A divalent metal cation serves as cofactor.

Accelerates the degradation of transcripts by removing pyrophosphate from the 5'-end of triphosphorylated RNA, leading to a more labile monophosphorylated state that can stimulate subsequent ribonuclease cleavage. The polypeptide is RNA pyrophosphohydrolase (Shewanella sediminis (strain HAW-EB3)).